The chain runs to 190 residues: ATP synthase subunit delta (190 aa).

This sequence belongs to the ATPase delta chain family. As to quaternary structure, F-type ATPases have 2 components, F(1) - the catalytic core - and F(0) - the membrane proton channel. F(1) has five subunits: alpha(3), beta(3), gamma(1), delta(1), epsilon(1). F(0) has three main subunits: a(1), b(2) and c(10-14). The alpha and beta chains form an alternating ring which encloses part of the gamma chain. F(1) is attached to F(0) by a central stalk formed by the gamma and epsilon chains, while a peripheral stalk is formed by the delta and b chains.

Its subcellular location is the cell inner membrane. F(1)F(0) ATP synthase produces ATP from ADP in the presence of a proton or sodium gradient. F-type ATPases consist of two structural domains, F(1) containing the extramembraneous catalytic core and F(0) containing the membrane proton channel, linked together by a central stalk and a peripheral stalk. During catalysis, ATP synthesis in the catalytic domain of F(1) is coupled via a rotary mechanism of the central stalk subunits to proton translocation. Its function is as follows. This protein is part of the stalk that links CF(0) to CF(1). It either transmits conformational changes from CF(0) to CF(1) or is implicated in proton conduction. The chain is ATP synthase subunit delta from Beijerinckia indica subsp. indica (strain ATCC 9039 / DSM 1715 / NCIMB 8712).